The primary structure comprises 759 residues: MIYRHIKIRDMNDDDLINMSKRHGLSLSLDEMKAVRDYFIKEGRDPIDAEIHAIAQSWSEHCSYKSSKFYLKKYLTNLKTDYTILAMEDDAGVVEFDKDYAYVLKMESHNHPSAVEPYGGAATGIGGIVRDVVCMGAQPIALVDSLFMGDVASQKYDALLSPRYIFQGVVGGIRDYGNRIGVPNVAGSVYFDQSYNSNPLVNAGCIGIVRKDRIVRSKSYKAGDKLLLVGGKTGRDGIHGVNFASATLTRISKSSRNAIQLGNPIVEHPMMRAVLEANELGIIKAMKDLGGGGLSSAATEMVFAGGFGAEISLDDIKLKDTDMSGWEIWISESQERMLVEVLPEDVEKMKEIAEKWSLDFSILGTVVEGKKITVRYKNKKIIDMDIEFLDKAPVYQRPFERKNIEKKVSIPSEPEDLNDFALNFVSRLNNSARFNVVRQYDHTVRGSTIVGPFSGRPNLETHSDATVIKPLEDSMRGLLITSGSRPNFVSIDPYNGTLETLSEAVRNIVSTGGKPNSVVDALNFGNPERQDIMGQFVESVRAIGDFCRKFSLPVVAGNVSFYNEFRNKDIMPTPTIMMVGIIDDVTKARTTYFKKNKSQIYLVGTPCDNLSGSEYARMNNIFDGFLPAPNLSELQLEIEKIGKFSPYILSAHDVSDGGLFMALAEMSFGSGIGFNIDLGNVSASRSSVKLFSECGNQIVLEIDPIHEEEFTAEFKDLKIVRIGETGGDRIIIDEYGMNLVDLPVQDLRERWEHGLDAYI.

Residue His61 is part of the active site. Tyr64 and Lys105 together coordinate ATP. Position 107 (Glu107) interacts with Mg(2+). Residues 108 to 111 (SHNH) and Arg130 contribute to the substrate site. His109 serves as the catalytic Proton acceptor. Asp131 contacts Mg(2+). Gln260 is a substrate binding site. Asp288 is a Mg(2+) binding site. 332 to 334 (ESQ) provides a ligand contact to substrate. Residues Asp520 and Gly557 each coordinate ATP. A Mg(2+)-binding site is contributed by Asn558. Residue Ser560 coordinates substrate.

This sequence belongs to the FGAMS family. In terms of assembly, monomer. Part of the FGAM synthase complex composed of 1 PurL, 1 PurQ and 2 PurS subunits.

The protein resides in the cytoplasm. The enzyme catalyses N(2)-formyl-N(1)-(5-phospho-beta-D-ribosyl)glycinamide + L-glutamine + ATP + H2O = 2-formamido-N(1)-(5-O-phospho-beta-D-ribosyl)acetamidine + L-glutamate + ADP + phosphate + H(+). Its pathway is purine metabolism; IMP biosynthesis via de novo pathway; 5-amino-1-(5-phospho-D-ribosyl)imidazole from N(2)-formyl-N(1)-(5-phospho-D-ribosyl)glycinamide: step 1/2. Its function is as follows. Part of the phosphoribosylformylglycinamidine synthase complex involved in the purines biosynthetic pathway. Catalyzes the ATP-dependent conversion of formylglycinamide ribonucleotide (FGAR) and glutamine to yield formylglycinamidine ribonucleotide (FGAM) and glutamate. The FGAM synthase complex is composed of three subunits. PurQ produces an ammonia molecule by converting glutamine to glutamate. PurL transfers the ammonia molecule to FGAR to form FGAM in an ATP-dependent manner. PurS interacts with PurQ and PurL and is thought to assist in the transfer of the ammonia molecule from PurQ to PurL. The sequence is that of Phosphoribosylformylglycinamidine synthase subunit PurL from Thermoplasma volcanium (strain ATCC 51530 / DSM 4299 / JCM 9571 / NBRC 15438 / GSS1).